Consider the following 351-residue polypeptide: UDP-3-O-acylglucosamine N-acyltransferase (351 aa).

Residue histidine 239 is the Proton acceptor of the active site.

Belongs to the transferase hexapeptide repeat family. LpxD subfamily. As to quaternary structure, homotrimer.

It catalyses the reaction a UDP-3-O-[(3R)-3-hydroxyacyl]-alpha-D-glucosamine + a (3R)-hydroxyacyl-[ACP] = a UDP-2-N,3-O-bis[(3R)-3-hydroxyacyl]-alpha-D-glucosamine + holo-[ACP] + H(+). It participates in bacterial outer membrane biogenesis; LPS lipid A biosynthesis. Catalyzes the N-acylation of UDP-3-O-acylglucosamine using 3-hydroxyacyl-ACP as the acyl donor. Is involved in the biosynthesis of lipid A, a phosphorylated glycolipid that anchors the lipopolysaccharide to the outer membrane of the cell. The protein is UDP-3-O-acylglucosamine N-acyltransferase of Vibrio cholerae serotype O1 (strain ATCC 39315 / El Tor Inaba N16961).